A 25-amino-acid chain; its full sequence is Pregnancy-associated glycoprotein 72 (25 aa).

N-linked (GlcNAc...) asparagine glycans are attached at residues Asn-4 and Asn-21.

This sequence belongs to the peptidase A1 family. In terms of processing, N-glycosylated. In terms of tissue distribution, expressed in chorionic epithelium (trophectoderm).

It is found in the secreted. The protein localises to the extracellular space. The polypeptide is Pregnancy-associated glycoprotein 72 (Bison bison (American bison)).